A 95-amino-acid polypeptide reads, in one-letter code: Citrate lyase acyl carrier protein (95 aa).

At S14 the chain carries O-(phosphoribosyl dephospho-coenzyme A)serine.

The protein belongs to the CitD family. In terms of assembly, oligomer with a subunit composition of (alpha,beta,gamma)6.

Its subcellular location is the cytoplasm. In terms of biological role, covalent carrier of the coenzyme of citrate lyase. The polypeptide is Citrate lyase acyl carrier protein (Haemophilus influenzae (strain PittGG)).